The sequence spans 244 residues: Agamous-like MADS-box protein MADS3 (244 aa).

Positions 1–61 (MGRGRVELKR…GKLYEFGSAG (61 aa)) constitute an MADS-box domain. The 91-residue stretch at 85–175 (TQSWYQEVSK…KLKLEAEGQS (91 aa)) folds into the K-box domain. Residues 180–206 (QGSWNPSTATAGNSSFPVHPSQSNPMD) form a disordered region. Over residues 181-204 (GSWNPSTATAGNSSFPVHPSQSNP) the composition is skewed to polar residues.

Expressed in flowers and seeds.

It localises to the nucleus. In terms of biological role, probable transcription factor involved in flower development. In Vitis vinifera (Grape), this protein is Agamous-like MADS-box protein MADS3.